Consider the following 564-residue polypeptide: Pestheic acid cluster transcriptional regulator 3 (564 aa).

The segment at residues cysteine 11–cysteine 38 is a DNA-binding region (zn(2)-C6 fungal-type). The tract at residues arginine 71–serine 123 is disordered. The segment covering serine 97–serine 113 has biased composition (polar residues).

The protein localises to the nucleus. Transcription factor that, with ptaR1 and ptaR2, coregulates the expression of the gene cluster that mediates the biosynthesis of pestheic acid, a diphenyl ether which is a biosynthetic precursor of the unique chloropupukeananes. The chain is Pestheic acid cluster transcriptional regulator 3 from Pestalotiopsis fici (strain W106-1 / CGMCC3.15140).